The following is a 285-amino-acid chain: MKYIGAHVSAAGGLANAPARAAEIGATAFALFTKNQRQWRAAPLIPQVIDDFKIACEKYHFSAAQILPHDSYLINLGHPVSEALEKSRDAFLDEMQRCEQLGLTLLNFHPGSHLMQIAQEDCLARIAESINIALAQTEGVTAVIENTAGQGSNLGFEFEQLAAIIDGVEDKSRVGVCIDTCHAFAAGYDLRTPEACEKTFAEFGQIVGFQYLRGMHLNDAKSAFGSRVDRHHSLGEGNIGHDAFRWIMQDARFDGIPLVLETINPDIWAEEIAWLKAQQSEKAVA.

Positions 69, 109, 145, 179, 182, 216, 229, 231, and 261 each coordinate Zn(2+).

The protein belongs to the AP endonuclease 2 family. Zn(2+) is required as a cofactor.

The catalysed reaction is Endonucleolytic cleavage to 5'-phosphooligonucleotide end-products.. In terms of biological role, endonuclease IV plays a role in DNA repair. It cleaves phosphodiester bonds at apurinic or apyrimidinic (AP) sites, generating a 3'-hydroxyl group and a 5'-terminal sugar phosphate. This is Probable endonuclease 4 from Salmonella arizonae (strain ATCC BAA-731 / CDC346-86 / RSK2980).